Reading from the N-terminus, the 364-residue chain is DNA polymerase IV (364 aa).

The UmuC domain maps to 14 to 198 (IIHIDMDAFF…LPIEKFHGVG (185 aa)). Mg(2+) contacts are provided by Asp-18 and Asp-116. Glu-117 is an active-site residue.

This sequence belongs to the DNA polymerase type-Y family. Monomer. The cofactor is Mg(2+).

It is found in the cytoplasm. The catalysed reaction is DNA(n) + a 2'-deoxyribonucleoside 5'-triphosphate = DNA(n+1) + diphosphate. Its function is as follows. Poorly processive, error-prone DNA polymerase involved in untargeted mutagenesis. Copies undamaged DNA at stalled replication forks, which arise in vivo from mismatched or misaligned primer ends. These misaligned primers can be extended by PolIV. Exhibits no 3'-5' exonuclease (proofreading) activity. May be involved in translesional synthesis, in conjunction with the beta clamp from PolIII. The polypeptide is DNA polymerase IV (Streptococcus pyogenes serotype M6 (strain ATCC BAA-946 / MGAS10394)).